Reading from the N-terminus, the 155-residue chain is Ribosome maturation factor RimP (155 aa).

It belongs to the RimP family.

The protein localises to the cytoplasm. Functionally, required for maturation of 30S ribosomal subunits. The protein is Ribosome maturation factor RimP of Salinibacter ruber (strain DSM 13855 / M31).